We begin with the raw amino-acid sequence, 300 residues long: Small ribosomal subunit protein uS2 (300 aa).

A disordered region spans residues 269–300 (WEADGADWAASSAAAPAESWAAEAQGAEGAKW).

The protein belongs to the universal ribosomal protein uS2 family. Component of the small ribosomal subunit. Mature ribosomes consist of a small (40S) and a large (60S) subunit. The 40S subunit contains about 33 different proteins and 1 molecule of RNA (18S). The 60S subunit contains about 49 different proteins and 3 molecules of RNA (25S, 5.8S and 5S). Interacts with rps21.

The protein localises to the cytoplasm. In terms of biological role, required for the assembly and/or stability of the 40S ribosomal subunit. Required for the processing of the 20S rRNA-precursor to mature 18S rRNA in a late step of the maturation of 40S ribosomal subunits. This is Small ribosomal subunit protein uS2 (rps0) from Aspergillus terreus (strain NIH 2624 / FGSC A1156).